The chain runs to 879 residues: Beta-alanyl-bioamine nonribosomal peptide synthetase ebony (879 aa).

The tract at residues 26 to 540 is adenylation; that stretch reads FEEQQLRHAD…EHVPLLVNGK (515 aa). In terms of domain architecture, Carrier spans 573-650; it reads EDLKLTARDL…EIIEKMAANH (78 aa). An O-(pantetheine 4'-phosphoryl)serine modification is found at serine 611. The segment at 666–679 is condensation; the sequence is LKMEAVPLRLEHRQ. Residue glutamate 696 coordinates dopamine. Glutamate 696 is a binding site for histamine. Threonine 825 and asparagine 827 together coordinate beta-alanine.

Belongs to the NRP synthetase family. It depends on pantetheine 4'-phosphate as a cofactor. Requires Mg(2+) as cofactor. Expressed in the optic neuropils in the lamina and in distinct cells at the distal border of the medulla cortex (at protein level). Expressed in the protocerebrum and thoracic ganglia (at protein level). Expressed in antennal lobes, antennal nerves and subesophagic ganglion (at protein level). Specifically, expressed in epithelial glial cells of the medulla that surround the synaptic cleft of photoreceptor axonal endings (at protein level). Expressed in some cells in the cuticle.

It is found in the cytoplasm. The catalysed reaction is histamine + beta-alanine + ATP = carcinine + AMP + diphosphate + H(+). It carries out the reaction beta-alanine + ATP + H(+) = beta-alanyl-5'-AMP + diphosphate. It catalyses the reaction beta-alanyl-5'-AMP + holo-[peptidyl-carrier protein] = beta-alanyl-[peptidyl-carrier protein] + AMP + H(+). The enzyme catalyses beta-alanyl-[peptidyl-carrier protein] + histamine = carcinine + holo-[peptidyl-carrier protein] + H(+). The catalysed reaction is dopamine + beta-alanine + ATP = beta-alanyl-dopamine + AMP + diphosphate + H(+). It carries out the reaction beta-alanyl-[peptidyl-carrier protein] + dopamine = beta-alanyl-dopamine + holo-[peptidyl-carrier protein] + H(+). Functionally, nonribosomal peptide synthase which is required for the regulation of histamine and dopamine levels in various tissues through their condensation with beta-alanine. In epithelial glial cells, plays an essential role in the inactivation of histamine, the main neurotransmitter in the optical nerve system, by catalyzing the conversion of histamine into carcinine. In the cuticle, catalyzes the condensation of beta-alanine with dopamine to form beta-alanyl-dopamine (NBAD), a metabolite involved in the pigmentation and sclerotization of the insect cuticle. Also, regulates the cuticular hydrocarbon composition in females. Acts downstream of the body clock to regulate circadian behavioral rhythms. Can also condense beta-alanine with biogenic amines tyramine, octopamine, and serotonin in vitro. This Drosophila melanogaster (Fruit fly) protein is Beta-alanyl-bioamine nonribosomal peptide synthetase ebony.